We begin with the raw amino-acid sequence, 132 residues long: Small ribosomal subunit protein uS19 (132 aa).

Belongs to the universal ribosomal protein uS19 family.

In terms of biological role, protein S19 forms a complex with S13 that binds strongly to the 16S ribosomal RNA. This Pyrococcus abyssi (strain GE5 / Orsay) protein is Small ribosomal subunit protein uS19 (rps19).